We begin with the raw amino-acid sequence, 348 residues long: Ion-translocating oxidoreductase complex subunit D (348 aa).

The next 5 helical transmembrane spans lie at 15–35, 36–56, 67–87, 88–108, and 125–145; these read LTAKFMLWVMVAMLPALGMQA, YFFGYGVFIQVFIALLLAVAI, LTAFYVADLSGVLTALILAIS, IPPYAPYWIIVIGIIVALLLA, and VAYALLLVSFPVQMTGWLVPI. FMN phosphoryl threonine is present on threonine 186. Helical transmembrane passes span 212 to 232, 241 to 261, 265 to 285, 298 to 318, and 320 to 340; these read LFANGWWQINLAFLAGGLLLI, IPAAMLGMFALLSGLTDLLLP, LNVVSQLFSGAMMFGAFFIAT, LIFGGLIGLFVYLIRYYGNYP, and AVAFSVLLANICVPLIDHYTQ.

Belongs to the NqrB/RnfD family. The complex is composed of six subunits: RnfA, RnfB, RnfC, RnfD, RnfE and RnfG. Requires FMN as cofactor.

The protein localises to the cell inner membrane. Its function is as follows. Part of a membrane-bound complex that couples electron transfer with translocation of ions across the membrane. The protein is Ion-translocating oxidoreductase complex subunit D of Actinobacillus pleuropneumoniae serotype 3 (strain JL03).